Here is a 917-residue protein sequence, read N- to C-terminus: Low-density lipoprotein receptor-related protein 8 (917 aa).

Residues 1-24 form the signal peptide; it reads MCRPALARLLLLQLLLLKLYLGKG. The Extracellular portion of the chain corresponds to 25–838; it reads AMKECDKDQF…GQGFDSTVTA (814 aa). LDL-receptor class A domains are found at residues 28 to 64, 67 to 105, 108 to 146, 148 to 184, and 187 to 225; these read ECDK…ADCP, TCAE…AACT, VCPA…AGCA, ACSP…KKCS, and TCSP…ERCG. Intrachain disulfides connect cysteine 29–cysteine 41, cysteine 36–cysteine 54, cysteine 48–cysteine 63, cysteine 68–cysteine 80, cysteine 75–cysteine 93, cysteine 87–cysteine 104, cysteine 109–cysteine 123, cysteine 116–cysteine 136, cysteine 130–cysteine 145, cysteine 149–cysteine 161, cysteine 156–cysteine 174, cysteine 168–cysteine 183, cysteine 188–cysteine 200, cysteine 195–cysteine 213, cysteine 207–cysteine 224, cysteine 241–cysteine 259, cysteine 253–cysteine 268, cysteine 273–cysteine 285, cysteine 280–cysteine 298, cysteine 292–cysteine 307, cysteine 313–cysteine 326, cysteine 321–cysteine 339, cysteine 333–cysteine 350, cysteine 355–cysteine 366, cysteine 362–cysteine 375, cysteine 377–cysteine 389, cysteine 395–cysteine 405, cysteine 401–cysteine 414, and cysteine 416–cysteine 429. Residues tryptophan 46, aspartate 49, aspartate 51, aspartate 53, aspartate 59, and glutamate 60 each coordinate Ca(2+). A glycan (N-linked (GlcNAc...) asparagine) is linked at asparagine 158. Asparagine 196 carries N-linked (GlcNAc...) asparagine glycosylation. LDL-receptor class A domains lie at 272–308 and 312–351; these read TCRP…AGCV and ACES…KECG. One can recognise an EGF-like 1 domain in the interval 346-390; it reads PLKECGINECSLNNGGCSHICKDLKIGYECECPPGYKLLDKKTCG. An EGF-like 2; calcium-binding domain is found at 391-430; sequence DIDECENPDACSQICINYKGDYKCECYEGYEMDTLSKNCK. LDL-receptor class B repeat units lie at residues 476–522, 523–565, 566–609, 610–652, and 653–695; these read NRIY…DWVH, KNIY…DPTR, RFMY…DLLN, QRLY…AVFE, and DRVF…FHEL. N-linked (GlcNAc...) asparagine glycosylation occurs at asparagine 532. A glycan (N-linked (GlcNAc...) asparagine) is linked at asparagine 628. The clustered O-linked oligosaccharides stretch occupies residues 754–813; the sequence is TTPATVEVPTTTTSHPAATSTVTVTGSANTTTAVIPRAVSEATTAIPSSHSTTSLLIDSE. Residues asparagine 782 and asparagine 820 are each glycosylated (N-linked (GlcNAc...) asparagine). A helical membrane pass occupies residues 839–861; that stretch reads AVIGIVIPVVVIGLLCMGGYLIW. Topologically, residues 862–917 are cytoplasmic; sequence RNWKRKNTKSMNFDNPVYRKTTEEEDEDEIHIGRTAQIGHVYPARVALSLEDDGLP.

Belongs to the LDLR family. As to quaternary structure, homooligomer. In terms of tissue distribution, mainly in brain.

The protein localises to the cell membrane. Its function is as follows. Cell surface receptor for Reelin (RELN) and apolipoprotein E (apoE)-containing ligands. Also binds alpha2-macroglobulin. LRP8 participates in transmitting the extracellular Reelin signal to intracellular signaling processes, by binding to DAB1 on its cytoplasmic tail. Reelin acts via both the VLDL receptor (VLDLR) and LRP8 to regulate DAB1 tyrosine phosphorylation and microtubule function in neurons. LRP8 has higher affinity for Reelin than VLDLR. LRP8 is thus a key component of the Reelin pathway which governs neuronal layering of the forebrain during embryonic brain development. Not required for endocytic uptake of SEPP1 in the kidney which is mediated by LRP2. This chain is Low-density lipoprotein receptor-related protein 8 (LRP8), found in Gallus gallus (Chicken).